The primary structure comprises 334 residues: Holliday junction branch migration complex subunit RuvB (334 aa).

Residues 4–184 (ADRLISAGVI…FGIVQRLEFY (181 aa)) are large ATPase domain (RuvB-L). ATP is bound by residues Ile-23, Arg-24, Gly-65, Lys-68, Thr-69, Thr-70, 131–133 (EDY), Arg-174, Tyr-184, and Arg-221. Thr-69 provides a ligand contact to Mg(2+). Residues 185 to 255 (QVADLEHIVS…VAMKALDMLN (71 aa)) are small ATPAse domain (RuvB-S). The interval 258 to 334 (AEGFDFMDRK…YKHFGITREE (77 aa)) is head domain (RuvB-H). DNA-binding residues include Arg-294, Arg-313, and Arg-318.

Belongs to the RuvB family. In terms of assembly, homohexamer. Forms an RuvA(8)-RuvB(12)-Holliday junction (HJ) complex. HJ DNA is sandwiched between 2 RuvA tetramers; dsDNA enters through RuvA and exits via RuvB. An RuvB hexamer assembles on each DNA strand where it exits the tetramer. Each RuvB hexamer is contacted by two RuvA subunits (via domain III) on 2 adjacent RuvB subunits; this complex drives branch migration. In the full resolvosome a probable DNA-RuvA(4)-RuvB(12)-RuvC(2) complex forms which resolves the HJ.

The protein resides in the cytoplasm. It catalyses the reaction ATP + H2O = ADP + phosphate + H(+). Its function is as follows. The RuvA-RuvB-RuvC complex processes Holliday junction (HJ) DNA during genetic recombination and DNA repair, while the RuvA-RuvB complex plays an important role in the rescue of blocked DNA replication forks via replication fork reversal (RFR). RuvA specifically binds to HJ cruciform DNA, conferring on it an open structure. The RuvB hexamer acts as an ATP-dependent pump, pulling dsDNA into and through the RuvAB complex. RuvB forms 2 homohexamers on either side of HJ DNA bound by 1 or 2 RuvA tetramers; 4 subunits per hexamer contact DNA at a time. Coordinated motions by a converter formed by DNA-disengaged RuvB subunits stimulates ATP hydrolysis and nucleotide exchange. Immobilization of the converter enables RuvB to convert the ATP-contained energy into a lever motion, pulling 2 nucleotides of DNA out of the RuvA tetramer per ATP hydrolyzed, thus driving DNA branch migration. The RuvB motors rotate together with the DNA substrate, which together with the progressing nucleotide cycle form the mechanistic basis for DNA recombination by continuous HJ branch migration. Branch migration allows RuvC to scan DNA until it finds its consensus sequence, where it cleaves and resolves cruciform DNA. This chain is Holliday junction branch migration complex subunit RuvB, found in Yersinia enterocolitica serotype O:8 / biotype 1B (strain NCTC 13174 / 8081).